The chain runs to 617 residues: MRFLFPTRLINNSSLGLLRSPHTTAPIRSLWFRTKSPVFRSATTPIMTAVAFSSSLSIPPTSEEALPGKLWIKFNRECLFSIYSPFAVCLAAGNLKIDTFRQYIAQDVHFLKAFAHAYELAADCADDDDDKLAISDLRKSVMEELKMHDSFVQDWDLDINKEVSVNSATLRYTEFLLATASGKVEGCKAPGMLDTPFEKTKVAAYTLGAVTPCMRLYAFLGKEFGSLLDLSDVNHPYKKWIDNYSSDAFQASAKQTEDLLEKLSVSMTGEELDIIEKLYQQAMKLEVEFFHAQPLAQPTIVPLLKNHSKDDLVIFSDFDLTCTVVDSSAILAEIAIVTAPKDEQSRSGQQIHRMLSSDLKNTWNLLSKQYTEHYEECIESILNKKKADKFDYEGLCKALEQLSDFEKEANNRVIESGVLKGLNLEDIKRAGERLILQDGCINVFQKILKTENLNAELHVLSYCWCGDLIRAAFSAGGVDAVEVHANEFTFEESISTGEIERKVESPINKAQQFKSILQNRKNENNKKSFLSVYIGDSVGDLLCLLEADIGIVVSSSSSLRRVGSHFGVSFVPLFSGIVQKQKQHTEESSSSAWKGLSGTLYTVSSWAEIHSFALGWE.

A mitochondrion-targeting transit peptide spans 1–28; that stretch reads MRFLFPTRLINNSSLGLLRSPHTTAPIR. Aspartate 107 provides a ligand contact to substrate. The Nucleophile role is filled by cysteine 213. Substrate is bound by residues tyrosine 217 and tyrosine 244. Glutamate 286 (proton donor) is an active-site residue.

It in the N-terminal section; belongs to the TenA family. The protein in the C-terminal section; belongs to the HAD-like hydrolase superfamily.

It localises to the mitochondrion. Its subcellular location is the cytoplasm. It carries out the reaction thiamine phosphate + H2O = thiamine + phosphate. It catalyses the reaction 4-amino-5-aminomethyl-2-methylpyrimidine + H2O = 4-amino-5-hydroxymethyl-2-methylpyrimidine + NH4(+). Its function is as follows. May be involved in the salvage of thiamine breakdown products. This protein has a haloacid dehalogenase family domain fused to its TenA domain. Phosphatase with the highest activity against thiamine monophosphate (ThMP) and, with a lower activity, against thiamine diphosphate (ThDP), flavin mononucleotide, inorganic pyrophosphate, CTP and dATP. Has a thiamine salvage hydrolase activity, but only against 4-amino-5-aminomethyl-2-methylpyrimidine (amino-HMP) and not against N-formylamino-HMP, desthiothiamine, thiamine, ThMP, and ThDP. This is Bifunctional TH2 protein, mitochondrial from Arabidopsis thaliana (Mouse-ear cress).